Here is a 428-residue protein sequence, read N- to C-terminus: GTPase Obg (428 aa).

In terms of domain architecture, Obg spans Met-1–Leu-158. Positions Ala-159 to Glu-328 constitute an OBG-type G domain. Residues Gly-165–Ser-172, Phe-190–Thr-194, Asp-212–Gly-215, Thr-282–Asp-285, and Ser-309–Val-311 contribute to the GTP site. Mg(2+) is bound by residues Ser-172 and Thr-192. An OCT domain is found at Tyr-350–Asp-428.

This sequence belongs to the TRAFAC class OBG-HflX-like GTPase superfamily. OBG GTPase family. As to quaternary structure, monomer. It depends on Mg(2+) as a cofactor.

The protein resides in the cytoplasm. An essential GTPase which binds GTP, GDP and possibly (p)ppGpp with moderate affinity, with high nucleotide exchange rates and a fairly low GTP hydrolysis rate. Plays a role in control of the cell cycle, stress response, ribosome biogenesis and in those bacteria that undergo differentiation, in morphogenesis control. This Lactobacillus johnsonii (strain CNCM I-12250 / La1 / NCC 533) protein is GTPase Obg.